Consider the following 421-residue polypeptide: UDP-N-acetylglucosamine 1-carboxyvinyltransferase (421 aa).

22 to 23 contributes to the phosphoenolpyruvate binding site; sequence KN. Arg-93 contributes to the UDP-N-acetyl-alpha-D-glucosamine binding site. The active-site Proton donor is Cys-117. Residue Cys-117 is modified to 2-(S-cysteinyl)pyruvic acid O-phosphothioketal. Residues 122 to 126, Asp-308, and Ile-330 each bind UDP-N-acetyl-alpha-D-glucosamine; that span reads RPVDL.

Belongs to the EPSP synthase family. MurA subfamily.

It is found in the cytoplasm. It carries out the reaction phosphoenolpyruvate + UDP-N-acetyl-alpha-D-glucosamine = UDP-N-acetyl-3-O-(1-carboxyvinyl)-alpha-D-glucosamine + phosphate. Its pathway is cell wall biogenesis; peptidoglycan biosynthesis. In terms of biological role, cell wall formation. Adds enolpyruvyl to UDP-N-acetylglucosamine. In Pseudomonas savastanoi pv. phaseolicola (strain 1448A / Race 6) (Pseudomonas syringae pv. phaseolicola (strain 1448A / Race 6)), this protein is UDP-N-acetylglucosamine 1-carboxyvinyltransferase.